A 416-amino-acid polypeptide reads, in one-letter code: Lipid II:glycine glycyltransferase (416 aa).

Belongs to the FemABX family.

It is found in the cytoplasm. It carries out the reaction beta-D-GlcNAc-(1-&gt;4)-Mur2Ac(oyl-L-Ala-D-isoglutaminyl-L-Lys-D-Ala-D-Ala)-di-trans,octa-cis-undecaprenyl diphosphate + glycyl-tRNA(Gly) = beta-D-GlcNAc-(1-&gt;4)-Mur2Ac(oyl-L-Ala-D-isoglutaminyl-L-Lys-(N(6)-Gly)-D-Ala-D-Ala)-di-trans,octa-cis-undecaprenyl diphosphate + tRNA(Gly) + H(+). Catalyzes the incorporation of amino acid(s) into the interchain peptide bridge of peptidoglycan, using aminoacyl-tRNA as amino acid donor. The polypeptide is Lipid II:glycine glycyltransferase (femX) (Staphylococcus epidermidis (strain ATCC 35984 / DSM 28319 / BCRC 17069 / CCUG 31568 / BM 3577 / RP62A)).